The chain runs to 128 residues: Iron-sulfur cluster insertion protein ErpA 1 (128 aa).

Positions 47, 111, and 113 each coordinate iron-sulfur cluster.

Belongs to the HesB/IscA family. As to quaternary structure, homodimer. The cofactor is iron-sulfur cluster.

Functionally, required for insertion of 4Fe-4S clusters for at least IspG. This is Iron-sulfur cluster insertion protein ErpA 1 from Methylococcus capsulatus (strain ATCC 33009 / NCIMB 11132 / Bath).